The chain runs to 146 residues: Large ribosomal subunit protein uL13 (146 aa).

The protein belongs to the universal ribosomal protein uL13 family. Part of the 50S ribosomal subunit.

Its function is as follows. This protein is one of the early assembly proteins of the 50S ribosomal subunit, although it is not seen to bind rRNA by itself. It is important during the early stages of 50S assembly. The polypeptide is Large ribosomal subunit protein uL13 (Mycoplasma genitalium (strain ATCC 33530 / DSM 19775 / NCTC 10195 / G37) (Mycoplasmoides genitalium)).